The primary structure comprises 978 residues: Monofunctional C1-tetrahydrofolate synthase, mitochondrial (978 aa).

Low complexity predominate over residues Met1–Arg10. A mitochondrion-targeting transit peptide spans Met1 to Ala31. The disordered stretch occupies residues Met1–Arg71. The segment at Ala31 to Leu348 is methylenetetrahydrofolate dehydrogenase and cyclohydrolase. The span at Ser33 to Gly45 shows a compositional bias: gly residues. An N6-acetyllysine; alternate modification is found at Lys189. Position 189 is an N6-succinyllysine; alternate (Lys189). Residues His349–Phe978 form a formyltetrahydrofolate synthetase region. A Phosphoserine modification is found at Ser357. Position 423-430 (Thr423–Ser430) interacts with ATP. Lys596 is modified (N6-succinyllysine).

The protein in the N-terminal section; belongs to the tetrahydrofolate dehydrogenase/cyclohydrolase family. This sequence in the C-terminal section; belongs to the formate--tetrahydrofolate ligase family. Homodimer. In terms of tissue distribution, detected in most tissues, highest expression found in placenta, thymus and brain. Low expression is found in liver and skeletal muscle. Up-regulated in colon adenocarcinoma.

It localises to the mitochondrion. It catalyses the reaction (6S)-5,6,7,8-tetrahydrofolate + formate + ATP = (6R)-10-formyltetrahydrofolate + ADP + phosphate. Its pathway is one-carbon metabolism; tetrahydrofolate interconversion. May provide the missing metabolic reaction required to link the mitochondria and the cytoplasm in the mammalian model of one-carbon folate metabolism complementing thus the enzymatic activities of MTHFD2. The chain is Monofunctional C1-tetrahydrofolate synthase, mitochondrial from Homo sapiens (Human).